Reading from the N-terminus, the 418-residue chain is Cell division protein FtsA (418 aa).

Belongs to the FtsA/MreB family. As to quaternary structure, self-interacts. Interacts with FtsZ.

The protein resides in the cell inner membrane. Functionally, cell division protein that is involved in the assembly of the Z ring. May serve as a membrane anchor for the Z ring. The protein is Cell division protein FtsA of Buchnera aphidicola subsp. Acyrthosiphon pisum (strain APS) (Acyrthosiphon pisum symbiotic bacterium).